The following is a 159-amino-acid chain: Serine-protein kinase RsbW (159 aa).

This sequence belongs to the anti-sigma-factor family.

The catalysed reaction is L-seryl-[protein] + ATP = O-phospho-L-seryl-[protein] + ADP + H(+). It carries out the reaction L-threonyl-[protein] + ATP = O-phospho-L-threonyl-[protein] + ADP + H(+). Its function is as follows. Negative regulator of sigma-B activity. Phosphorylates and inactivates its specific antagonist protein, RsbV. Upon phosphorylation of RsbV, RsbW is released and binds to sigma-B, thereby blocking its ability to form an RNA polymerase holoenzyme (E-sigma-B). This Staphylococcus epidermidis protein is Serine-protein kinase RsbW.